A 529-amino-acid polypeptide reads, in one-letter code: Retinoic acid-induced protein 2 (529 aa).

Disordered stretches follow at residues 1–21 (MDDL…PTLA) and 400–419 (SHSS…HPGS). Positions 407 to 416 (GTEMVSQPSH) are enriched in polar residues.

This chain is Retinoic acid-induced protein 2 (Rai2), found in Mus musculus (Mouse).